The sequence spans 501 residues: Beta-secretase 1 (501 aa).

The signal sequence occupies residues 1-21; the sequence is MAQALPWLLLWMGAGVLPAHG. Residues 22–45 constitute a propeptide that is removed on maturation; that stretch reads TQHGIRLPLRSGLGGAPLGLRLPR. The Extracellular segment spans residues 22–457; sequence TQHGIRLPLR…PQTDESTLMT (436 aa). The interval 39-58 is disordered; that stretch reads LGLRLPRETDEEPEEPGRRG. Positions 75 to 416 constitute a Peptidase A1 domain; that stretch reads YYVEMTVGSP…DRARKRIGFA (342 aa). Residue Asp93 is part of the active site. Lys126 bears the N6-acetyllysine mark. Asn153, Asn172, and Asn223 each carry an N-linked (GlcNAc...) asparagine glycan. Cystine bridges form between Cys216–Cys420, Cys278–Cys443, and Cys330–Cys380. An N6-acetyllysine mark is found at Lys275, Lys279, and Lys285. The active site involves Asp289. 3 positions are modified to N6-acetyllysine: Lys299, Lys300, and Lys307. Asn354 carries an N-linked (GlcNAc...) asparagine glycan. A helical transmembrane segment spans residues 458–478; sequence IAYVMAAICALFMLPLCLMVC. Residues Cys474, Cys478, Cys482, and Cys485 are each lipidated (S-palmitoyl cysteine). Over 479–501 the chain is Cytoplasmic; it reads QWRCLRCLRQQHDDFADDISLLK. Residues 479–501 form an interaction with RTN3 region; that stretch reads QWRCLRCLRQQHDDFADDISLLK. The DXXLL motif lies at 496-500; that stretch reads DISLL. At Ser498 the chain carries Phosphoserine. Lys501 participates in a covalent cross-link: Glycyl lysine isopeptide (Lys-Gly) (interchain with G-Cter in ubiquitin).

It belongs to the peptidase A1 family. Monomer. Interacts (via DXXLL motif) with GGA1, GGA2 and GGA3 (via their VHS domain); the interaction highly increases when BACE1 is phosphorylated at Ser-498. Interacts with RTN1; RTN2; RTN3 and RTN4; the interaction leads to inhibition of amyloid precursor protein processing. Interacts with SNX6. Interacts with PCSK9. Interacts with NAT8 and NAT8B. Interacts with BIN1. Interacts (via extracellular domain) with ADAM10 (via extracellular domain). Interacts with SORL1; this interaction may affect binding with APP and hence reduce APP cleavage. Interacts with NRDC AND NRG1. N-Glycosylated. Addition of a bisecting N-acetylglucosamine by MGAT3 blocks lysosomal targeting, further degradation and is required for maintaining stability under stress conditions. In terms of processing, acetylated in the endoplasmic reticulum at Lys-126, Lys-275, Lys-279, Lys-285, Lys-299, Lys-300 and Lys-307. Acetylation by NAT8 and NAT8B is transient and deacetylation probably occurs in the Golgi. Acetylation regulates the maturation, the transport to the plasma membrane, the stability and the expression of the protein. Post-translationally, palmitoylation mediates lipid raft localization. Ubiquitinated at Lys-501, ubiquitination leads to lysosomal degradation. Monoubiquitinated and 'Lys-63'-linked polyubitinated. Deubiquitnated by USP8; inhibits lysosomal degradation. In terms of processing, phosphorylation at Ser-498 is required for interaction with GGA1 and retrograded transport from endosomal compartments to the trans-Golgi network. Non-phosphorylated BACE1 enters a direct recycling route to the cell surface. Expressed at high levels in the brain and pancreas. In the brain, expression is highest in the substantia nigra, locus coruleus and medulla oblongata.

The protein localises to the cell membrane. The protein resides in the golgi apparatus. It localises to the trans-Golgi network. It is found in the endoplasmic reticulum. Its subcellular location is the endosome. The protein localises to the cell surface. The protein resides in the cytoplasmic vesicle membrane. It localises to the membrane raft. It is found in the lysosome. Its subcellular location is the late endosome. The protein localises to the early endosome. The protein resides in the recycling endosome. It localises to the cell projection. It is found in the axon. Its subcellular location is the dendrite. It catalyses the reaction Broad endopeptidase specificity. Cleaves Glu-Val-Asn-Leu-|-Asp-Ala-Glu-Phe in the Swedish variant of Alzheimer's amyloid precursor protein.. With respect to regulation, inhibited by RTN3 and RTN4. In terms of biological role, responsible for the proteolytic processing of the amyloid precursor protein (APP). Cleaves at the N-terminus of the A-beta peptide sequence, between residues 671 and 672 of APP, leads to the generation and extracellular release of beta-cleaved soluble APP, and a corresponding cell-associated C-terminal fragment which is later released by gamma-secretase. Cleaves CHL1. The chain is Beta-secretase 1 from Homo sapiens (Human).